A 179-amino-acid chain; its full sequence is GTP-dependent dephospho-CoA kinase (179 aa).

GTP is bound by residues D49, V50, V51, D68, K70, and E126.

This sequence belongs to the GTP-dependent DPCK family.

It catalyses the reaction 3'-dephospho-CoA + GTP = GDP + CoA + H(+). Its pathway is cofactor biosynthesis; coenzyme A biosynthesis. In terms of biological role, catalyzes the GTP-dependent phosphorylation of the 3'-hydroxyl group of dephosphocoenzyme A to form coenzyme A (CoA). This is GTP-dependent dephospho-CoA kinase from Pyrococcus abyssi (strain GE5 / Orsay).